We begin with the raw amino-acid sequence, 312 residues long: MNYEGHLKGHRGWVTSLACPQQAGSYIKVVSTSRDGTAISWKANPDRHSVDSDYGLPSHRLEGHTGFVSCVSLAHATDYALTASWDRSIRMWDLRNGQCQRKFLKHTKDVLAVAFSPDDRLIVSAGRDNVIRVWNVAGECMHEFLRDGHEDWVSSICFSPSLEHPIVVSGSWDNTIKVWNVNGGKCERTLKGHSNYVSTVTVSPDGSLCASGGKDGAALLWDLSTGEQLFKINVESPINQIAFSPNRFWMCVATERSLSVYDLESKAVIAELTPDGAKPSECISIAWSADGNTLYSGHKDNLIRVWSISDAE.

7 WD repeats span residues 9 to 42 (GHRG…ISWK), 63 to 93 (GHTG…RMWD), 105 to 135 (KHTK…RVWN), 148 to 180 (GHED…KVWN), 192 to 222 (GHSN…LLWD), 233 to 262 (NVES…SVYD), and 279 to 307 (PSEC…RVWS).

Belongs to the WD repeat G protein beta family. Ribosomal protein RACK1 subfamily.

This chain is Small ribosomal subunit protein RACK1, found in Leishmania chagasi.